An 813-amino-acid chain; its full sequence is Nuclear pore complex protein 5 (813 aa).

This sequence belongs to the nucleoporin Nup84/Nup107 family. As to quaternary structure, part of the nuclear pore complex (NPC). May interact with mdf-1.

It is found in the nucleus. It localises to the nuclear pore complex. Its subcellular location is the chromosome. The protein localises to the centromere. The protein resides in the kinetochore. It is found in the nucleus membrane. Its function is as follows. Involved in kinetochore assembly and chromosome segregation during embryonic mitosis. Required for the localization of the NDC80 complex member him-10, the chromosomal passenger complex component air-2 and nuclear pore complex proteins npp-23 and npp-15 to kinetochores during metaphase. Required for npp-23 localization to the nuclear envelope during interphase. Recruits mdf-1, a component of the spindle assembly checkpoint, to the nuclear envelope. Appears dispensable for the assembly of the nuclear pore complex and for nuclear protein import. This Caenorhabditis elegans protein is Nuclear pore complex protein 5.